The primary structure comprises 694 residues: Elongation factor G (694 aa).

A tr-type G domain is found at 8–287 (EDYRNFGIMA…AVVEFLPAPT (280 aa)). GTP-binding positions include 17–24 (AHIDAGKT), 86–90 (DTPGH), and 140–143 (NKMD).

It belongs to the TRAFAC class translation factor GTPase superfamily. Classic translation factor GTPase family. EF-G/EF-2 subfamily.

The protein localises to the cytoplasm. Functionally, catalyzes the GTP-dependent ribosomal translocation step during translation elongation. During this step, the ribosome changes from the pre-translocational (PRE) to the post-translocational (POST) state as the newly formed A-site-bound peptidyl-tRNA and P-site-bound deacylated tRNA move to the P and E sites, respectively. Catalyzes the coordinated movement of the two tRNA molecules, the mRNA and conformational changes in the ribosome. This Brucella anthropi (strain ATCC 49188 / DSM 6882 / CCUG 24695 / JCM 21032 / LMG 3331 / NBRC 15819 / NCTC 12168 / Alc 37) (Ochrobactrum anthropi) protein is Elongation factor G.